The chain runs to 261 residues: UPF0246 protein AZOSEA34360 (261 aa).

Belongs to the UPF0246 family.

This Aromatoleum aromaticum (strain DSM 19018 / LMG 30748 / EbN1) (Azoarcus sp. (strain EbN1)) protein is UPF0246 protein AZOSEA34360.